Consider the following 311-residue polypeptide: E3 ubiquitin-protein ligase RNF126 (311 aa).

Residues Cys13, Cys16, Cys29, and Cys32 each contribute to the Zn(2+) site. The C4-type zinc-finger motif lies at 13–32 (CHSCTAEIIPRLPEYTCPRC). 2 disordered regions span residues 42–62 (ETRNSENNSSNNSGTDQNRPS) and 95–133 (GTSGPVEEPRDGESRREHQSRQRYGARQPRARLSTRRAA). Over residues 101 to 114 (EEPRDGESRREHQS) the composition is skewed to basic and acidic residues. The segment covering 123–133 (PRARLSTRRAA) has biased composition (basic residues). The RING-type zinc-finger motif lies at 227-268 (CPVCKEDYTVGESVRQLPCNHLFHNDCIIPWLEQHDTCPVCR). Residues 274–311 (QNTATNPPGLTEMTFSSSSTSSSSSTSPTDENNAANNS) form a disordered region. The segment covering 289–300 (SSSSTSSSSSTS) has biased composition (low complexity). A compositionally biased stretch (polar residues) spans 301 to 311 (PTDENNAANNS).

The protein resides in the cytoplasm. It is found in the nucleus. The enzyme catalyses S-ubiquitinyl-[E2 ubiquitin-conjugating enzyme]-L-cysteine + [acceptor protein]-L-lysine = [E2 ubiquitin-conjugating enzyme]-L-cysteine + N(6)-ubiquitinyl-[acceptor protein]-L-lysine.. It participates in protein modification; protein ubiquitination. Functionally, E3 ubiquitin-protein ligase that mediates ubiquitination oF target proteins. Depending on the associated E2 ligase, mediates 'Lys-27'-, 'Lys-29'-, 'Lys-48'- and/or 'Lys-63'-linked polyubiquitination of substrates. Part of a BAG6-dependent quality control process ensuring that proteins of the secretory pathway that are mislocalized to the cytosol are degraded by the proteasome. Probably acts by providing the ubiquitin ligase activity associated with the BAG6 complex and be responsible for ubiquitination of the hydrophobic mislocalized proteins and their targeting to the proteasome. This chain is E3 ubiquitin-protein ligase RNF126, found in Xenopus tropicalis (Western clawed frog).